Here is a 789-residue protein sequence, read N- to C-terminus: Transducer protein Htr6 (789 aa).

2 helical membrane-spanning segments follow: residues 29–49 (FAVA…FAFQ) and 294–314 (TVTV…IALG). HAMP domains lie at 315-367 (RHTV…DRIQ) and 409-462 (ERLQ…ATIA). Residues 481–717 (GAEEIETTSQ…SVVRRVDDVA (237 aa)) enclose the Methyl-accepting transducer domain. Residues 763-789 (NQFETRADADEPDADTTVDASADDTGD) are disordered. The segment covering 772 to 789 (DEPDADTTVDASADDTGD) has biased composition (acidic residues).

It belongs to the methyl-accepting chemotaxis (MCP) protein family. In terms of processing, methylated by CheR.

Its subcellular location is the cell membrane. Functionally, potentially involved in chemo- or phototactic signal transduction. In Halobacterium salinarum (strain ATCC 29341 / DSM 671 / R1), this protein is Transducer protein Htr6 (htr6).